A 248-amino-acid polypeptide reads, in one-letter code: Isoprenyl transferase (248 aa).

Residue Asp23 is part of the active site. Position 23 (Asp23) interacts with Mg(2+). Substrate contacts are provided by residues 24-27 (GNGR), Trp28, Arg36, His40, and 68-70 (STE). The active-site Proton acceptor is the Asn71. Substrate contacts are provided by residues Trp72, Arg74, Arg185, and 191–193 (RIS). Residue Glu204 coordinates Mg(2+).

Belongs to the UPP synthase family. In terms of assembly, homodimer. It depends on Mg(2+) as a cofactor.

Functionally, catalyzes the condensation of isopentenyl diphosphate (IPP) with allylic pyrophosphates generating different type of terpenoids. The polypeptide is Isoprenyl transferase (Neisseria meningitidis serogroup A / serotype 4A (strain DSM 15465 / Z2491)).